A 332-amino-acid chain; its full sequence is Anthranilate phosphoribosyltransferase (332 aa).

5-phospho-alpha-D-ribose 1-diphosphate-binding positions include Gly-80, 83–84 (GD), Thr-88, 90–93 (NLST), 108–116 (KHGNRSASG), and Ser-120. Gly-80 serves as a coordination point for anthranilate. A Mg(2+)-binding site is contributed by Ser-92. Position 111 (Asn-111) interacts with anthranilate. Arg-166 lines the anthranilate pocket. Positions 224 and 225 each coordinate Mg(2+).

Belongs to the anthranilate phosphoribosyltransferase family. In terms of assembly, homodimer. Mg(2+) is required as a cofactor.

It carries out the reaction N-(5-phospho-beta-D-ribosyl)anthranilate + diphosphate = 5-phospho-alpha-D-ribose 1-diphosphate + anthranilate. It participates in amino-acid biosynthesis; L-tryptophan biosynthesis; L-tryptophan from chorismate: step 2/5. In terms of biological role, catalyzes the transfer of the phosphoribosyl group of 5-phosphorylribose-1-pyrophosphate (PRPP) to anthranilate to yield N-(5'-phosphoribosyl)-anthranilate (PRA). The chain is Anthranilate phosphoribosyltransferase from Pyrobaculum calidifontis (strain DSM 21063 / JCM 11548 / VA1).